The sequence spans 123 residues: Small ribosomal subunit protein uS12 (123 aa).

D89 carries the 3-methylthioaspartic acid modification. A disordered region spans residues 102-123 (LDTQGVKDRKQGRSKYGAKRPK). The segment covering 113-123 (GRSKYGAKRPK) has biased composition (basic residues).

It belongs to the universal ribosomal protein uS12 family. In terms of assembly, part of the 30S ribosomal subunit. Contacts proteins S8 and S17. May interact with IF1 in the 30S initiation complex.

Functionally, with S4 and S5 plays an important role in translational accuracy. In terms of biological role, interacts with and stabilizes bases of the 16S rRNA that are involved in tRNA selection in the A site and with the mRNA backbone. Located at the interface of the 30S and 50S subunits, it traverses the body of the 30S subunit contacting proteins on the other side and probably holding the rRNA structure together. The combined cluster of proteins S8, S12 and S17 appears to hold together the shoulder and platform of the 30S subunit. The polypeptide is Small ribosomal subunit protein uS12 (Magnetococcus marinus (strain ATCC BAA-1437 / JCM 17883 / MC-1)).